A 137-amino-acid polypeptide reads, in one-letter code: Protein CTLA-2-alpha (137 aa).

The first 27 residues, 1–27 (MMVSICEQKLQHFSAVFLLILCLGMMS), serve as a signal peptide directing secretion. 2 repeat units span residues 39 to 41 (EWK) and 42 to 44 (EWK). The interval 39-44 (EWKEWK) is 2 X 3 AA tandem repeats of E-W-K. A disordered region spans residues 114–137 (APDLPEYEDLGKNSYLTPGRAQPE).

The protein to the propeptide regions of cysteine proteases.

The protein localises to the secreted. Not known, expressed in activated T-cell. This chain is Protein CTLA-2-alpha (Ctla2a), found in Mus musculus (Mouse).